The sequence spans 179 residues: UPF0227 protein Shewmr4_1727 (179 aa).

The protein belongs to the UPF0227 family.

In Shewanella sp. (strain MR-4), this protein is UPF0227 protein Shewmr4_1727.